We begin with the raw amino-acid sequence, 481 residues long: Proline--tRNA ligase (481 aa).

It belongs to the class-II aminoacyl-tRNA synthetase family. ProS type 3 subfamily. Homodimer.

It localises to the cytoplasm. The enzyme catalyses tRNA(Pro) + L-proline + ATP = L-prolyl-tRNA(Pro) + AMP + diphosphate. Functionally, catalyzes the attachment of proline to tRNA(Pro) in a two-step reaction: proline is first activated by ATP to form Pro-AMP and then transferred to the acceptor end of tRNA(Pro). This chain is Proline--tRNA ligase, found in Chlorobium limicola (strain DSM 245 / NBRC 103803 / 6330).